Consider the following 156-residue polypeptide: DNA mismatch endonuclease Vsr (156 aa).

Positions 51 and 63 each coordinate Mg(2+).

This sequence belongs to the Vsr family. Mg(2+) is required as a cofactor. It depends on Zn(2+) as a cofactor.

Its function is as follows. Deamination of 5-methylcytosine in DNA results in T/G mismatches. If unrepaired, these mismatches can lead to C-to-T transition mutations. The very short patch (VSP) repair process in E.coli counteracts the mutagenic process by repairing the mismatches in favor of the G-containing strand. This enzyme is an endonuclease that nicks double-stranded DNA within the sequence CT(AT)GN or NT(AT)GG next to the thymidine residue that is mismatched to 2'-deoxyguanosine. The incision is mismatch-dependent and strand-specific. The protein is DNA mismatch endonuclease Vsr of Escherichia coli (strain K12).